The following is a 475-amino-acid chain: Ribulose bisphosphate carboxylase large chain (475 aa).

Positions 1-2 (MS) are excised as a propeptide. An N-acetylproline modification is found at Pro-3. At Lys-14 the chain carries N6,N6,N6-trimethyllysine. 2 residues coordinate substrate: Asn-123 and Thr-173. Lys-175 serves as the catalytic Proton acceptor. Lys-177 serves as a coordination point for substrate. Positions 201, 203, and 204 each coordinate Mg(2+). Position 201 is an N6-carboxylysine (Lys-201). His-294 acts as the Proton acceptor in catalysis. Residues Arg-295, His-327, and Ser-379 each coordinate substrate.

The protein belongs to the RuBisCO large chain family. Type I subfamily. In terms of assembly, heterohexadecamer of 8 large chains and 8 small chains; disulfide-linked. The disulfide link is formed within the large subunit homodimers. Requires Mg(2+) as cofactor. The disulfide bond which can form in the large chain dimeric partners within the hexadecamer appears to be associated with oxidative stress and protein turnover.

The protein resides in the plastid. It is found in the chloroplast. It catalyses the reaction 2 (2R)-3-phosphoglycerate + 2 H(+) = D-ribulose 1,5-bisphosphate + CO2 + H2O. The enzyme catalyses D-ribulose 1,5-bisphosphate + O2 = 2-phosphoglycolate + (2R)-3-phosphoglycerate + 2 H(+). Its function is as follows. RuBisCO catalyzes two reactions: the carboxylation of D-ribulose 1,5-bisphosphate, the primary event in carbon dioxide fixation, as well as the oxidative fragmentation of the pentose substrate in the photorespiration process. Both reactions occur simultaneously and in competition at the same active site. The protein is Ribulose bisphosphate carboxylase large chain of Amaranthus tricolor (Joseph's coat).